A 31-amino-acid polypeptide reads, in one-letter code: MESFAYILILGLAIATLFFAIAFRDPPKIGK.

A helical transmembrane segment spans residues 3–23 (SFAYILILGLAIATLFFAIAF).

This sequence belongs to the PsbT family. In terms of assembly, PSII is composed of 1 copy each of membrane proteins PsbA, PsbB, PsbC, PsbD, PsbE, PsbF, PsbH, PsbI, PsbJ, PsbK, PsbL, PsbM, PsbT, PsbX, PsbY, PsbZ, Psb30/Ycf12, peripheral proteins PsbO, CyanoQ (PsbQ), PsbU, PsbV and a large number of cofactors. It forms dimeric complexes.

It localises to the cellular thylakoid membrane. In terms of biological role, found at the monomer-monomer interface of the photosystem II (PS II) dimer, plays a role in assembly and dimerization of PSII. PSII is a light-driven water plastoquinone oxidoreductase, using light energy to abstract electrons from H(2)O, generating a proton gradient subsequently used for ATP formation. The polypeptide is Photosystem II reaction center protein T (Synechococcus sp. (strain CC9311)).